The sequence spans 374 residues: Translocating chain-associated membrane protein 1 (374 aa).

Residues 2–29 lie on the Cytoplasmic side of the membrane; it reads AIRKKSTKSPPVLSHEFILQNHADIVSC. Residues 30–50 traverse the membrane as a helical segment; it reads VAMVFLLGLMFEITAKASIIF. At 51–76 the chain is on the lumenal side; that stretch reads VTLQYNVTLPATEEQATESTSLYYYG. The N-linked (GlcNAc...) asparagine glycan is linked to asparagine 56. Residues 77–97 form a helical membrane-spanning segment; the sequence is IKDLATVFFYMLVAIIIHAII. Residues 98 to 121 are Cytoplasmic-facing; sequence QEYVLDKINRRMHFSKTKHSKFNE. A TLC domain is found at 117-326; it reads SKFNESGQLS…NFQLRRWREH (210 aa). The chain crosses the membrane as a helical span at residues 122–142; it reads SGQLSAFYLFSCIWGTFILIS. Over 143-159 the chain is Lumenal; the sequence is ENYISDPTILWRAYPHN. A helical membrane pass occupies residues 160–180; it reads LMTFQMKFFYIAQLAYWFHAF. Topologically, residues 181-192 are cytoplasmic; sequence PELYFQKTKKED. The helical transmembrane segment at 193–213 threads the bilayer; sequence IPRQLVYIGLYLFHIAGAYLL. Over 214–217 the chain is Lumenal; that stretch reads NLNH. The helical transmembrane segment at 218-238 threads the bilayer; sequence LGLVLLVLHYFVEFLFHISRL. The Cytoplasmic portion of the chain corresponds to 239–251; that stretch reads FYFSDEKYQKGFS. A helical membrane pass occupies residues 252 to 272; the sequence is LWAVLFVLGRLLTLILSVLTV. Residues 273-297 are Lumenal-facing; it reads GFGLARAENQKLDFSAGNFNVLAVR. A helical membrane pass occupies residues 298–318; the sequence is IAVLASICITQAFMMWKFINF. Residues 319-374 lie on the Cytoplasmic side of the membrane; that stretch reads QLRRWREHSTFQAPVVKKKPTVTKGRSSRKGTENGVNGTVTSNGADSPRNRKEKSS. Over residues 334-347 the composition is skewed to basic residues; sequence VKKKPTVTKGRSSR. The interval 334–374 is disordered; the sequence is VKKKPTVTKGRSSRKGTENGVNGTVTSNGADSPRNRKEKSS. Polar residues predominate over residues 352–363; it reads NGVNGTVTSNGA. At serine 365 the chain carries Phosphoserine.

This sequence belongs to the TRAM family. In terms of assembly, interacts with SEC61B. May interact with Derlin-1/DERL1. Post-translationally, N-glycosylated.

It localises to the endoplasmic reticulum membrane. Its function is as follows. Involved in the translocation of nascent protein chains into or through the endoplasmic reticulum (ER) membrane by facilitating the proper chain positioning at the SEC61 channel. Regulates the exposure of nascent secretory protein chain to the cytosol during translocation into the ER. May affect the phospholipid bilayer in the vicinity of the lateral gate of the SEC61 channel, thereby facilitating ER protein transport. Intimately associates with transmembrane (TM) domain of nascent membrane proteins during the entire integration process into the ER membrane. Associates with the second TM domain of G-protein-coupled receptor opsin/OPSD nascent chain in the ER membrane, which may facilitate its integration into the membrane. Under conditions of ER stress, participates in the disposal of misfolded ER membrane proteins during the unfolded protein response (UPR), an integrated stress response (ISR) pathway, by selectively retrotranslocating misfolded ER-membrane proteins from the ER into the cytosol where they are ubiquitinated and degraded by the proteasome. The sequence is that of Translocating chain-associated membrane protein 1 (TRAM1) from Canis lupus familiaris (Dog).